The primary structure comprises 149 residues: MDVQLPIEAKDIQKLIPHRYPFLQLDRITAFEPMKTLTAIKNVTINEPQFQGHFPDLPVMPGVLIIEAMAQACGTLAILSEGGRKENEFFFFAGIDEARFKRQVIPGDQLVFEVELLTSRRGIGKFNAVAKVDGQVAVEAIIMCAKRVV.

His-53 is an active-site residue.

The protein belongs to the thioester dehydratase family. FabZ subfamily.

Its subcellular location is the cytoplasm. It carries out the reaction a (3R)-hydroxyacyl-[ACP] = a (2E)-enoyl-[ACP] + H2O. Involved in unsaturated fatty acids biosynthesis. Catalyzes the dehydration of short chain beta-hydroxyacyl-ACPs and long chain saturated and unsaturated beta-hydroxyacyl-ACPs. The polypeptide is 3-hydroxyacyl-[acyl-carrier-protein] dehydratase FabZ (Neisseria meningitidis serogroup B (strain ATCC BAA-335 / MC58)).